We begin with the raw amino-acid sequence, 509 residues long: Cobyric acid synthase (509 aa).

Positions 262–459 (ELKVGIIKLP…IHGIFENDDW (198 aa)) constitute a GATase cobBQ-type domain. The Nucleophile role is filled by cysteine 343. Histidine 451 is an active-site residue.

Belongs to the CobB/CobQ family. CobQ subfamily.

It functions in the pathway cofactor biosynthesis; adenosylcobalamin biosynthesis. Catalyzes amidations at positions B, D, E, and G on adenosylcobyrinic A,C-diamide. NH(2) groups are provided by glutamine, and one molecule of ATP is hydrogenolyzed for each amidation. The sequence is that of Cobyric acid synthase from Prochlorococcus marinus subsp. pastoris (strain CCMP1986 / NIES-2087 / MED4).